The sequence spans 362 residues: Glutamine synthetase (362 aa).

Positions 26–107 (LIAEYIWIDS…VLSECWNADG (82 aa)) constitute a GS beta-grasp domain. A GS catalytic domain is found at 114–362 (HRHEAAKLME…METCFGAVSE (249 aa)).

Belongs to the glutamine synthetase family. Homooctamer.

It localises to the cytoplasm. The catalysed reaction is L-glutamate + NH4(+) + ATP = L-glutamine + ADP + phosphate + H(+). The polypeptide is Glutamine synthetase (gln-1) (Neurospora crassa (strain ATCC 24698 / 74-OR23-1A / CBS 708.71 / DSM 1257 / FGSC 987)).